Consider the following 119-residue polypeptide: Putative F420H(2)-dependent quinone reductase Rv3178 (119 aa).

Coenzyme F420-(gamma-Glu)n is bound by residues 21–23, 27–32, 43–46, and 54–58; these read RKS, FVAPLL, VASA, and QWYRN.

The protein belongs to the F420H(2)-dependent quinone reductase family.

The protein localises to the cell membrane. The enzyme catalyses oxidized coenzyme F420-(gamma-L-Glu)(n) + a quinol + H(+) = reduced coenzyme F420-(gamma-L-Glu)(n) + a quinone. Involved in a F420-dependent anti-oxidant mechanism that protects M.tuberculosis against oxidative stress and bactericidal agents. Catalyzes the F420H(2)-dependent two-electron reduction of quinones to dihydroquinones, thereby preventing the formation of cytotoxic semiquinones obtained by the one-electron reduction pathway. Since menaquinone is the sole quinone electron carrier in the respiratory chain in M.tuberculosis, the physiological electron acceptor for Fqr-mediated F420H(2) oxidation is therefore likely to be the endogenous menaquinone found in the membrane fraction of M.tuberculosis. The sequence is that of Putative F420H(2)-dependent quinone reductase Rv3178 from Mycobacterium tuberculosis (strain ATCC 25618 / H37Rv).